We begin with the raw amino-acid sequence, 269 residues long: tRNA pseudouridine synthase A (269 aa).

Asp-51 serves as the catalytic Nucleophile. Substrate is bound at residue Tyr-109.

It belongs to the tRNA pseudouridine synthase TruA family. Homodimer.

It catalyses the reaction uridine(38/39/40) in tRNA = pseudouridine(38/39/40) in tRNA. Formation of pseudouridine at positions 38, 39 and 40 in the anticodon stem and loop of transfer RNAs. The chain is tRNA pseudouridine synthase A from Aeromonas hydrophila subsp. hydrophila (strain ATCC 7966 / DSM 30187 / BCRC 13018 / CCUG 14551 / JCM 1027 / KCTC 2358 / NCIMB 9240 / NCTC 8049).